The sequence spans 953 residues: Translation initiation factor IF-2 (953 aa).

Disordered stretches follow at residues 48–212 (SSFS…KIDF) and 279–367 (TKLK…FHEL). 3 stretches are compositionally biased toward basic and acidic residues: residues 80 to 89 (TGSEHVEKTQ), 98 to 111 (FKAE…EQAA), and 140 to 188 (QGDK…ENHK). Composition is skewed to polar residues over residues 191-207 (RFTN…QSKS) and 282-291 (KSSNISAKST). Residues 300-317 (ARPEKNRELTHHSQEGQK) are compositionally biased toward basic and acidic residues. The span at 322-338 (SWNSQNQVRNQKNSNWN) shows a compositional bias: low complexity. The span at 339–348 (KNKKTKKGKN) shows a compositional bias: basic residues. The tr-type G domain occupies 454 to 623 (ERAPVVTIMG…LLVAEVEELK (170 aa)). The segment at 463-470 (GHVDHGKT) is G1. GTP is bound at residue 463 to 470 (GHVDHGKT). The interval 488–492 (GITQH) is G2. The interval 509-512 (DTPG) is G3. GTP contacts are provided by residues 509 to 513 (DTPGH) and 563 to 566 (NKID). Positions 563–566 (NKID) are G4. The interval 599–601 (SAK) is G5.

It belongs to the TRAFAC class translation factor GTPase superfamily. Classic translation factor GTPase family. IF-2 subfamily.

The protein localises to the cytoplasm. One of the essential components for the initiation of protein synthesis. Protects formylmethionyl-tRNA from spontaneous hydrolysis and promotes its binding to the 30S ribosomal subunits. Also involved in the hydrolysis of GTP during the formation of the 70S ribosomal complex. The sequence is that of Translation initiation factor IF-2 from Streptococcus pyogenes serotype M3 (strain ATCC BAA-595 / MGAS315).